Reading from the N-terminus, the 204-residue chain is Transmembrane protein 253 (204 aa).

4 consecutive transmembrane segments (helical) span residues 33–53 (LVLAVSQVWLAIAMVPFTISV), 62–82 (LVTALPLWPGASGLLTGIITL), 96–116 (MMISNTFNLILGFVAVVIEVM), and 138–158 (LSAEAFTLAGVLVSTYALFLL). The disordered stretch occupies residues 184 to 204 (EEVSGLENGPVVASTGNRTDE).

Its subcellular location is the membrane. The sequence is that of Transmembrane protein 253 (Tmem253) from Mus musculus (Mouse).